A 249-amino-acid polypeptide reads, in one-letter code: NADH dehydrogenase [ubiquinone] flavoprotein 2, mitochondrial (249 aa).

Residues 1-32 constitute a mitochondrion transit peptide; that stretch reads MFFSAALRARAAGLTAQWGRHVRNLHKTAMQN. Lys61 carries the N6-acetyllysine modification. [2Fe-2S] cluster-binding residues include Cys135, Cys140, Cys176, and Cys180. At Tyr193 the chain carries Phosphotyrosine; by SRC. Positions 213-249 are disordered; it reads IPKPGPRSGRFSCEPAGGLTSLTEPPKGPGFGVQAGL.

Belongs to the complex I 24 kDa subunit family. Core subunit of respiratory chain NADH dehydrogenase (Complex I) which is composed of 45 different subunits. This is a component of the flavoprotein-sulfur (FP) fragment of the enzyme. The cofactor is [2Fe-2S] cluster.

Its subcellular location is the mitochondrion inner membrane. It catalyses the reaction a ubiquinone + NADH + 5 H(+)(in) = a ubiquinol + NAD(+) + 4 H(+)(out). Its function is as follows. Core subunit of the mitochondrial membrane respiratory chain NADH dehydrogenase (Complex I) which catalyzes electron transfer from NADH through the respiratory chain, using ubiquinone as an electron acceptor. Parts of the peripheral arm of the enzyme, where the electrons from NADH are accepted by flavin mononucleotide (FMN) and then passed along a chain of iron-sulfur clusters by electron tunnelling to the final acceptor ubiquinone. Contains one iron-sulfur cluster. This Gorilla gorilla gorilla (Western lowland gorilla) protein is NADH dehydrogenase [ubiquinone] flavoprotein 2, mitochondrial.